Here is a 578-residue protein sequence, read N- to C-terminus: Proline--tRNA ligase (578 aa).

This sequence belongs to the class-II aminoacyl-tRNA synthetase family. ProS type 1 subfamily. In terms of assembly, homodimer.

It localises to the cytoplasm. The catalysed reaction is tRNA(Pro) + L-proline + ATP = L-prolyl-tRNA(Pro) + AMP + diphosphate. In terms of biological role, catalyzes the attachment of proline to tRNA(Pro) in a two-step reaction: proline is first activated by ATP to form Pro-AMP and then transferred to the acceptor end of tRNA(Pro). As ProRS can inadvertently accommodate and process non-cognate amino acids such as alanine and cysteine, to avoid such errors it has two additional distinct editing activities against alanine. One activity is designated as 'pretransfer' editing and involves the tRNA(Pro)-independent hydrolysis of activated Ala-AMP. The other activity is designated 'posttransfer' editing and involves deacylation of mischarged Ala-tRNA(Pro). The misacylated Cys-tRNA(Pro) is not edited by ProRS. In Burkholderia cenocepacia (strain HI2424), this protein is Proline--tRNA ligase.